The primary structure comprises 359 residues: Guanine nucleotide-binding protein subunit alpha-11 (359 aa).

Residues Cys9 and Cys10 are each lipidated (S-palmitoyl cysteine). Positions 38–359 (RELKLLLLGT…QLNLKEYNLV (322 aa)) constitute a G-alpha domain. The tract at residues 41–54 (KLLLLGTGESGKST) is G1 motif. Residues 46–53 (GTGESGKS) and 180–183 (LRVR) contribute to the GTP site. Ser53 lines the Mg(2+) pocket. The G2 motif stretch occupies residues 178 to 186 (DVLRVRVPT). Thr186 provides a ligand contact to Mg(2+). The interval 201–210 (FRMVDVGGQR) is G3 motif. The interval 270–277 (ILFLNKKD) is G4 motif. GTP-binding positions include 274–277 (NKKD) and Ala331. A G5 motif region spans residues 329 to 334 (TCATDT).

This sequence belongs to the G-alpha family. G(q) subfamily. G proteins are composed of 3 units; alpha, beta and gamma. The alpha chain contains the guanine nucleotide binding site. Interacts with RGS22. Interacts with NTSR1.

It localises to the cell membrane. It is found in the cytoplasm. The catalysed reaction is GTP + H2O = GDP + phosphate + H(+). Its function is as follows. Guanine nucleotide-binding proteins (G proteins) function as transducers downstream of G protein-coupled receptors (GPCRs) in numerous signaling cascades. The alpha chain contains the guanine nucleotide binding site and alternates between an active, GTP-bound state and an inactive, GDP-bound state. Signaling by an activated GPCR promotes GDP release and GTP binding. The alpha subunit has a low GTPase activity that converts bound GTP to GDP, thereby terminating the signal. Both GDP release and GTP hydrolysis are modulated by numerous regulatory proteins. Signaling is mediated via phospholipase C-beta-dependent inositol lipid hydrolysis for signal propagation: activates phospholipase C-beta: following GPCR activation, GNA11 activates PLC-beta (PLCB1, PLCB2, PLCB3 or PLCB4), leading to production of diacylglycerol (DAG) and inositol 1,4,5-trisphosphate (IP3). Transduces FFAR4 signaling in response to long-chain fatty acids (LCFAs). Together with GNAQ, required for heart development. In the respiratory epithelium, transmits OXGR1-dependent signals that lead to downstream intracellular Ca(2+) release and mucocilliary clearance of airborne pathogens. This is Guanine nucleotide-binding protein subunit alpha-11 (GNA11) from Sus scrofa (Pig).